Consider the following 98-residue polypeptide: NADH-ubiquinone oxidoreductase chain 4L (98 aa).

A run of 3 helical transmembrane segments spans residues 1-21 (MTTM…GVFI), 29-49 (TLLC…LILL), and 59-79 (LPLI…ALLV).

This sequence belongs to the complex I subunit 4L family. As to quaternary structure, core subunit of respiratory chain NADH dehydrogenase (Complex I) which is composed of 45 different subunits.

It is found in the mitochondrion inner membrane. It carries out the reaction a ubiquinone + NADH + 5 H(+)(in) = a ubiquinol + NAD(+) + 4 H(+)(out). In terms of biological role, core subunit of the mitochondrial membrane respiratory chain NADH dehydrogenase (Complex I) which catalyzes electron transfer from NADH through the respiratory chain, using ubiquinone as an electron acceptor. Part of the enzyme membrane arm which is embedded in the lipid bilayer and involved in proton translocation. The chain is NADH-ubiquinone oxidoreductase chain 4L (MT-ND4L) from Ornithorhynchus anatinus (Duckbill platypus).